Here is an 85-residue protein sequence, read N- to C-terminus: UPF0297 protein CPR_1749 (85 aa).

It belongs to the UPF0297 family.

The sequence is that of UPF0297 protein CPR_1749 from Clostridium perfringens (strain SM101 / Type A).